A 423-amino-acid chain; its full sequence is UDP-N-acetylglucosamine 1-carboxyvinyltransferase (423 aa).

A phosphoenolpyruvate-binding site is contributed by 22-23 (KN). Residue arginine 98 participates in UDP-N-acetyl-alpha-D-glucosamine binding. Cysteine 122 serves as the catalytic Proton donor. At cysteine 122 the chain carries 2-(S-cysteinyl)pyruvic acid O-phosphothioketal. UDP-N-acetyl-alpha-D-glucosamine-binding positions include 127–131 (RPVDQ), aspartate 311, and isoleucine 333.

The protein belongs to the EPSP synthase family. MurA subfamily.

It localises to the cytoplasm. It catalyses the reaction phosphoenolpyruvate + UDP-N-acetyl-alpha-D-glucosamine = UDP-N-acetyl-3-O-(1-carboxyvinyl)-alpha-D-glucosamine + phosphate. It participates in cell wall biogenesis; peptidoglycan biosynthesis. Functionally, cell wall formation. Adds enolpyruvyl to UDP-N-acetylglucosamine. This is UDP-N-acetylglucosamine 1-carboxyvinyltransferase from Stenotrophomonas maltophilia (strain K279a).